A 257-amino-acid chain; its full sequence is Enterotoxin type E (257 aa).

An N-terminal signal peptide occupies residues 1 to 27 (MKKTAFILLLFIALTLTTSPLVNGSEK). C120 and C130 are disulfide-bonded. 3 residues coordinate Zn(2+): H211, H249, and D251.

This sequence belongs to the staphylococcal/streptococcal toxin family. In terms of assembly, interacts with host MHC class II molecules composed of alpha/HLA-DRA and beta/HLA-DRB1 chains. Interacts with host T-cell receptor beta variable TRBV7-9. Requires Zn(2+) as cofactor.

It is found in the secreted. Staphylococcal enterotoxin that activates the host immune system by binding as unprocessed molecules to major histocompatibility (MHC) complex class II and T-cell receptor (TCR) molecules. In turn, this ternary complex activates a large number of T-lymphocytes initiating a systemic release of pro-inflammatory cytokines. Also causes the intoxication staphylococcal food poisoning syndrome. This is Enterotoxin type E (entE) from Staphylococcus aureus.